Reading from the N-terminus, the 544-residue chain is CTP synthase (544 aa).

Positions 1–266 (MATNYIFVTG…DDFVCDRFRL (266 aa)) are amidoligase domain. Ser14 contributes to the CTP binding site. Position 14 (Ser14) interacts with UTP. ATP is bound by residues 15–20 (SLGKGI) and Asp72. Positions 72 and 140 each coordinate Mg(2+). CTP is bound by residues 147-149 (DIE), 187-192 (KTKPTQ), and Lys223. Residues 187 to 192 (KTKPTQ) and Lys223 contribute to the UTP site. 239–241 (KDV) is an ATP binding site. The Glutamine amidotransferase type-1 domain occupies 291–542 (TIGMVGKYVE…VKAAKEHQGK (252 aa)). Gly352 is an L-glutamine binding site. Cys379 functions as the Nucleophile; for glutamine hydrolysis in the catalytic mechanism. L-glutamine contacts are provided by residues 380–383 (LGMQ), Glu403, and Arg470. Catalysis depends on residues His515 and Glu517.

The protein belongs to the CTP synthase family. As to quaternary structure, homotetramer.

It carries out the reaction UTP + L-glutamine + ATP + H2O = CTP + L-glutamate + ADP + phosphate + 2 H(+). The catalysed reaction is L-glutamine + H2O = L-glutamate + NH4(+). The enzyme catalyses UTP + NH4(+) + ATP = CTP + ADP + phosphate + 2 H(+). The protein operates within pyrimidine metabolism; CTP biosynthesis via de novo pathway; CTP from UDP: step 2/2. Allosterically activated by GTP, when glutamine is the substrate; GTP has no effect on the reaction when ammonia is the substrate. The allosteric effector GTP functions by stabilizing the protein conformation that binds the tetrahedral intermediate(s) formed during glutamine hydrolysis. Inhibited by the product CTP, via allosteric rather than competitive inhibition. In terms of biological role, catalyzes the ATP-dependent amination of UTP to CTP with either L-glutamine or ammonia as the source of nitrogen. Regulates intracellular CTP levels through interactions with the four ribonucleotide triphosphates. In Glaesserella parasuis serovar 5 (strain SH0165) (Haemophilus parasuis), this protein is CTP synthase.